A 173-amino-acid polypeptide reads, in one-letter code: UPF0398 protein SMU_470 (173 aa).

The protein belongs to the UPF0398 family.

This Streptococcus mutans serotype c (strain ATCC 700610 / UA159) protein is UPF0398 protein SMU_470.